Reading from the N-terminus, the 185-residue chain is Transcription termination/antitermination protein NusG (185 aa).

The KOW domain occupies 134 to 164 (VGKRVRIVDGAFSGFEAPITEINGDKLTLTV).

This sequence belongs to the NusG family.

In terms of biological role, participates in transcription elongation, termination and antitermination. The chain is Transcription termination/antitermination protein NusG from Lactococcus lactis subsp. lactis (strain IL1403) (Streptococcus lactis).